Here is a 532-residue protein sequence, read N- to C-terminus: Light-independent protochlorophyllide reductase subunit B (532 aa).

Residue D36 coordinates [4Fe-4S] cluster. Catalysis depends on D282, which acts as the Proton donor. Residue 417 to 418 coordinates substrate; sequence GL.

This sequence belongs to the ChlB/BchB/BchZ family. Protochlorophyllide reductase is composed of three subunits; BchL, BchN and BchB. Forms a heterotetramer of two BchB and two BchN subunits. [4Fe-4S] cluster serves as cofactor.

It carries out the reaction chlorophyllide a + oxidized 2[4Fe-4S]-[ferredoxin] + 2 ADP + 2 phosphate = protochlorophyllide a + reduced 2[4Fe-4S]-[ferredoxin] + 2 ATP + 2 H2O. The protein operates within porphyrin-containing compound metabolism; bacteriochlorophyll biosynthesis (light-independent). Functionally, component of the dark-operative protochlorophyllide reductase (DPOR) that uses Mg-ATP and reduced ferredoxin to reduce ring D of protochlorophyllide (Pchlide) to form chlorophyllide a (Chlide). This reaction is light-independent. The NB-protein (BchN-BchB) is the catalytic component of the complex. This chain is Light-independent protochlorophyllide reductase subunit B, found in Methylobacterium radiotolerans (strain ATCC 27329 / DSM 1819 / JCM 2831 / NBRC 15690 / NCIMB 10815 / 0-1).